Consider the following 254-residue polypeptide: Photosystem II 22 kDa protein 2, chloroplastic (254 aa).

The N-terminal 38 residues, 1-38, are a transit peptide targeting the chloroplast; sequence MALQQSMAMPMMVVSGLGTAPRSSPMVQLQRMKKHLVV. Tandem repeats lie at residues 42 to 148 and 149 to 253. Helical transmembrane passes span 86–106, 120–140, 184–204, and 219–239; these read VAML…KGIL, AEPL…GALG, LFVG…EIIT, and PINE…FAAI.

Belongs to the ELIP/psbS family.

Its subcellular location is the plastid. It is found in the chloroplast thylakoid membrane. Functionally, involved in high light-mediated energy-dependent nonphotochemical quenching (NPQ, qE) and thermal dissipation (TD) thus regulating energy conversion in photosystem II and protecting from photoinhibition. Also seems to regulate quantum yield of electron transport in fluctuating light conditions. In Oryza sativa subsp. indica (Rice), this protein is Photosystem II 22 kDa protein 2, chloroplastic.